Here is a 258-residue protein sequence, read N- to C-terminus: UPF0246 protein HI_0984 (258 aa).

Belongs to the UPF0246 family.

The sequence is that of UPF0246 protein HI_0984 from Haemophilus influenzae (strain ATCC 51907 / DSM 11121 / KW20 / Rd).